A 439-amino-acid chain; its full sequence is Acyl-coenzyme A thioesterase 9, mitochondrial (439 aa).

The transit peptide at 1–21 (MRRAALRLCALGKGQLTPGRG) directs the protein to the mitochondrion. HotDog ACOT-type domains are found at residues 84–209 (KDSY…RDSE) and 289–401 (ENSK…EKEV). Lys-103 bears the N6-acetyllysine mark.

It belongs to the acyl coenzyme A hydrolase family. In terms of assembly, interacts with NYAP1, NYAP2 and MYO16.

It is found in the mitochondrion. The protein resides in the mitochondrion matrix. The protein localises to the mitochondrion inner membrane. It catalyses the reaction butanoyl-CoA + H2O = butanoate + CoA + H(+). It carries out the reaction propanoyl-CoA + H2O = propanoate + CoA + H(+). The catalysed reaction is hexadecanoyl-CoA + H2O = hexadecanoate + CoA + H(+). The enzyme catalyses octanoyl-CoA + H2O = octanoate + CoA + H(+). It catalyses the reaction decanoyl-CoA + H2O = decanoate + CoA + H(+). It carries out the reaction tetradecanoyl-CoA + H2O = tetradecanoate + CoA + H(+). The catalysed reaction is 4,8-dimethylnonanoyl-CoA + H2O = 4,8-dimethylnonanoate + CoA + H(+). The enzyme catalyses 3-methylbutanoyl-CoA + H2O = 3-methylbutanoate + CoA + H(+). It catalyses the reaction 2-methylpropanoyl-CoA + H2O = 2-methylpropanoate + CoA + H(+). It participates in lipid metabolism; fatty acid metabolism. With respect to regulation, strongly inhibited by NADH and CoA. Functionally, mitochondrial acyl-CoA thioesterase. Catalyzes the hydrolysis of acyl-CoAs into free fatty acids and coenzyme A (CoA), regulating their respective intracellular levels. Regulates both mitochondrial lipid and amino acid metabolism. This chain is Acyl-coenzyme A thioesterase 9, mitochondrial, found in Homo sapiens (Human).